The primary structure comprises 286 residues: Neuferricin homolog (286 aa).

The first 23 residues, 1–23 (MFGFVKYLFKLQFLFILAAVLAG), serve as a signal peptide directing secretion. The region spanning 61-145 (ATVLTSAELS…KPNDLLGLAN (85 aa)) is the Cytochrome b5 heme-binding domain. The stretch at 176–200 (HKYLALLEQAQIAKAEVDELRSKYP) forms a coiled coil.

It belongs to the cytochrome b5 family. MAPR subfamily.

Its subcellular location is the secreted. In terms of biological role, heme-binding protein. This Drosophila pseudoobscura pseudoobscura (Fruit fly) protein is Neuferricin homolog.